A 112-amino-acid polypeptide reads, in one-letter code: ENSTAIVMITKLKERKEKCSEYMPLKCGEKHTYENFEIEIKNVRNADHYTVRTIEVRNTEEDNATHTVYHYWYAEWLDHDTPEKLRGLLTLIQEVGLRCPDIANSEYGPVVV.

A Tyrosine-protein phosphatase domain is found at glutamate 1–valine 112.

It belongs to the protein-tyrosine phosphatase family.

The catalysed reaction is O-phospho-L-tyrosyl-[protein] + H2O = L-tyrosyl-[protein] + phosphate. In Styela plicata (Wrinkled sea squirt), this protein is Tyrosine-protein phosphatase 8 (STY-8).